A 274-amino-acid polypeptide reads, in one-letter code: Penicillin-insensitive murein endopeptidase (274 aa).

An N-terminal signal peptide occupies residues 1–19; the sequence is MNKTAIALLALLASSASLA. 3 disulfides stabilise this stretch: C44–C265, C187–C235, and C216–C223. 6 residues coordinate Zn(2+): H110, H113, D120, D147, H150, and H211. Residues 228–274 form a disordered region; that stretch reads LPPSGDGCGAELQSWFEPPKPGTTKPEKKTPPPLPPSCQALLDEHVI.

It belongs to the peptidase M74 family. In terms of assembly, dimer. The cofactor is Zn(2+).

The protein localises to the periplasm. Its activity is regulated as follows. Inhibited by Zn(2+) at 10 mM and by metal chelating agents EDTA and 1,10-phenanthroline. Functionally, murein endopeptidase that cleaves the D-alanyl-meso-2,6-diamino-pimelyl amide bond that connects peptidoglycan strands. Likely plays a role in the removal of murein from the sacculus and could also play a role in the integration of nascent murein strands into the sacculus. This chain is Penicillin-insensitive murein endopeptidase (mepA), found in Escherichia coli (strain K12).